The primary structure comprises 1002 residues: Carboxypeptidase Y (1002 aa).

Residues 1-18 (MLMKQTFLYFLLTCVVSA) form the signal peptide. Residues 19–521 (QFNGYVPPEQ…AYLEMLKAEG (503 aa)) constitute a propeptide that is removed on maturation. 3 disordered regions span residues 51–91 (QEES…TALE), 124–436 (DEDE…NMQS), and 527–546 (AFRD…ADSS). Composition is skewed to basic and acidic residues over residues 63-81 (PERD…HEFN) and 127-143 (EHVR…EDAP). Over residues 144–170 (RRKHGKCKGKGKHHKGKHAKGKGKKSH) the composition is skewed to basic residues. Basic and acidic residues predominate over residues 171–205 (PKPEDDSVFFDDERPKHHEFDDEDREFPAHHEPGE). A run of 15 repeats spans residues 225-237 (MHHE…PPPP), 238-250 (MHHE…PPPP), 251-263 (MHHE…PPPP), 264-276 (MHHE…PPPP), 277-289 (MHHE…PPPP), 290-302 (MHHE…PPPP), 303-315 (MHHE…PPPP), 316-328 (MHHE…PPPP), 329-341 (MHHE…PPPP), 361-369 (DKEHHKGPK), 370-378 (DKEHHKGPK), 379-387 (DKEHHKGPK), 388-396 (DKEHHKGPK), 397-405 (DKEHHKGPK), and 406-414 (DKEHHKGPK). A 9 X 13 AA tandem repeats of M-H-H-E-P-G-E-H-M-P-P-P-P region spans residues 225–341 (MHHEPGEHMP…EPGEHMPPPP (117 aa)). Residues 343–431 (KHHELEEHEG…PKEKHNERPE (89 aa)) show a composition bias toward basic and acidic residues. Residues 361 to 423 (DKEHHKGPKD…KDKEHHQGPK (63 aa)) are 7 X 9 AA tandem repeats of D-K-E-H-H-K-G-P-K. A 2-7; approximate repeat occupies 415–423 (DKEHHQGPK). 5 cysteine pairs are disulfide-bonded: Cys-627/Cys-880, Cys-776/Cys-789, Cys-799/Cys-822, Cys-806/Cys-815, and Cys-844/Cys-851. Residue Asn-659 is glycosylated (N-linked (GlcNAc...) asparagine). Residue Ser-715 is part of the active site. Asp-921 is an active-site residue. Cys-924 provides a ligand contact to substrate. The active site involves His-978. Residue Met-979 participates in substrate binding.

The protein belongs to the peptidase S10 family. In terms of assembly, heterodimer of two subunits of 32 kDa and 19 kDa derived from the precursor protein and linked by a disulfide bond.

It is found in the vacuole. The catalysed reaction is Release of a C-terminal amino acid with broad specificity.. In terms of biological role, involved in degradation of small peptides. Digests preferentially peptides containing an aliphatic or hydrophobic residue in P1' position, as well as methionine, leucine or phenylalanine in P1 position of ester substrate. This chain is Carboxypeptidase Y (cpy1), found in Schizosaccharomyces pombe (strain 972 / ATCC 24843) (Fission yeast).